A 358-amino-acid polypeptide reads, in one-letter code: Uptake hydrogenase small subunit (358 aa).

A signal peptide (tat-type signal) is located at residues 1 to 45 (MSRLETFYDVMRRQGITRRSFLKYCSLTAAALGLGPAFAPRIAHA). Residues C62, C65, C160, C194, H232, C235, C260, and C266 each coordinate [4Fe-4S] cluster. The [3Fe-4S] cluster site is built by C275, C294, and C297.

Belongs to the [NiFe]/[NiFeSe] hydrogenase small subunit family. As to quaternary structure, heterodimer of a large and a small subunit. The cofactor is [4Fe-4S] cluster. [3Fe-4S] cluster serves as cofactor. Predicted to be exported by the Tat system. The position of the signal peptide cleavage has been experimentally proven.

It is found in the cell membrane. It catalyses the reaction H2 + A = AH2. Its function is as follows. This enzyme recycles the H(2) produced by nitrogenase to increase the production of ATP and to protect nitrogenase against inhibition or damage by O(2) under carbon- or phosphate-limited conditions. This Azotobacter vinelandii protein is Uptake hydrogenase small subunit (hoxK).